Here is an 87-residue protein sequence, read N- to C-terminus: Beta-toxin Ct17 (87 aa).

Positions 1 to 19 (MNSLLMITACLVLIGTVWA) are cleaved as a signal peptide. In terms of domain architecture, LCN-type CS-alpha/beta spans 20-85 (KKDGYLVDKT…TWPLPNKRCG (66 aa)). Cystine bridges form between C31-C84, C35-C60, C44-C65, and C48-C67. C84 carries the post-translational modification Cysteine amide.

It belongs to the long (4 C-C) scorpion toxin superfamily. Sodium channel inhibitor family. Beta subfamily. Expressed by the venom gland.

It is found in the secreted. Functionally, beta toxins bind voltage-independently at site-4 of sodium channels (Nav) and shift the voltage of activation toward more negative potentials thereby affecting sodium channel activation and promoting spontaneous and repetitive firing. Is possibly lethal to mice, freshwater shrimp and crickets. This Centruroides tecomanus (Scorpion) protein is Beta-toxin Ct17.